Consider the following 251-residue polypeptide: MSGHSKWATTKHKKAVVDARRGKLFAKLVKTVEVAAKTGGGDPAGNPTLADAIAKAKSQSVPNDNIERAIKRGSGELAGGVSYESVTYEAYGPNGVAVLVECLTDNRNRAASDVRVAITRNGGTPADPGSVSYLFNRKGVVLIDKTPTLTEDDILLAVLDAGAEEVNDVGEAFEVVSEATDLHAVRVAAAEADLTVASADISWLPSVSVPLDAEPARKVLKLVEALEDLDDVQNVWFNADISDDVMELVSS.

It belongs to the TACO1 family.

It localises to the cytoplasm. In Parafrankia sp. (strain EAN1pec), this protein is Probable transcriptional regulatory protein Franean1_5147.